A 191-amino-acid chain; its full sequence is UPF0302 protein USA300HOU_1400 (191 aa).

The protein belongs to the UPF0302 family.

In Staphylococcus aureus (strain USA300 / TCH1516), this protein is UPF0302 protein USA300HOU_1400.